A 142-amino-acid chain; its full sequence is Hemoglobin subunit alpha-2 (142 aa).

In terms of domain architecture, Globin spans 2–142 (VLSPADKTNV…VSTVLTSKYR (141 aa)). H59 lines the O2 pocket. H88 is a binding site for heme b.

Belongs to the globin family. Heterotetramer of two alpha chains and two beta chains. In terms of tissue distribution, red blood cells.

In terms of biological role, involved in oxygen transport from the lung to the various peripheral tissues. This chain is Hemoglobin subunit alpha-2, found in Arctocephalus galapagoensis (Galapagoes fur seal).